The sequence spans 106 residues: Iron-sulfur cluster assembly protein CyaY (106 aa).

This sequence belongs to the frataxin family.

Its function is as follows. Involved in iron-sulfur (Fe-S) cluster assembly. May act as a regulator of Fe-S biogenesis. The protein is Iron-sulfur cluster assembly protein CyaY of Escherichia coli O9:H4 (strain HS).